The sequence spans 1558 residues: Eukaryotic translation initiation factor 2-alpha kinase 1 (1558 aa).

Residues 429–789 (FFEEKILGCG…AYNLLHESVL (361 aa)) enclose the Protein kinase domain. ATP is bound by residues 435-443 (LGCGGFGYV) and Lys458. Asp660 acts as the Proton acceptor in catalysis. Residues 1014-1033 (GTSTNNNNNNNNNNMGNNNI) form a disordered region.

The protein belongs to the protein kinase superfamily. Ser/Thr protein kinase family. GCN2 subfamily. Auto-phosphorylated.

The catalysed reaction is L-seryl-[protein] + ATP = O-phospho-L-seryl-[protein] + ADP + H(+). The enzyme catalyses L-threonyl-[protein] + ATP = O-phospho-L-threonyl-[protein] + ADP + H(+). Functionally, in blood stage parasites, phosphorylates translation factor eIF2alpha in response to amino acid starvation. During the asexual blood stage, involved in the response to the host hormone melatonin which is used by the parasite to modulate its cell cycle. The polypeptide is Eukaryotic translation initiation factor 2-alpha kinase 1 (Plasmodium falciparum (isolate 3D7)).